A 253-amino-acid polypeptide reads, in one-letter code: Electron transfer flavoprotein subunit beta, mitochondrial (253 aa).

It belongs to the ETF beta-subunit/FixA family. As to quaternary structure, heterodimer of an alpha and a beta subunit. It depends on FAD as a cofactor. Requires AMP as cofactor.

The protein localises to the mitochondrion matrix. Its function is as follows. The electron transfer flavoprotein serves as a specific electron acceptor for several dehydrogenases, including five acyl-CoA dehydrogenases, glutaryl-CoA and sarcosine dehydrogenase. It transfers the electrons to the main mitochondrial respiratory chain via ETF-ubiquinone oxidoreductase (ETF dehydrogenase). The sequence is that of Electron transfer flavoprotein subunit beta, mitochondrial (ETFB) from Oryza sativa subsp. japonica (Rice).